A 417-amino-acid polypeptide reads, in one-letter code: Phosphoglycerate kinase 2 (417 aa).

Residue Ser2 is modified to N-acetylserine. A phosphoserine mark is found at Ser2 and Ser4. Lys11 carries the N6-acetyllysine modification. The (2R)-3-phosphoglycerate site is built by Val23, Asp24, Phe25, Asn26, Gln38, and Arg39. Lys48 carries the post-translational modification N6-acetyllysine. (2R)-3-phosphoglycerate is bound by residues Ser62, His63, Gly65, and Arg66. Lys75, Lys86, and Lys97 each carry N6-acetyllysine. Residues Leu122 and Arg123 each coordinate (2R)-3-phosphoglycerate. Residues Lys131 and Lys146 each carry the N6-acetyllysine modification. Positions 170 and 171 each coordinate (2R)-3-phosphoglycerate. Tyr196 bears the Phosphotyrosine mark. N6-acetyllysine is present on Lys199. An ADP-binding site is contributed by Gly214. Gly214 contributes to the CDP binding site. Positions 215 and 216 each coordinate AMP. Position 215 (Ala215) interacts with ATP. Ala215 is a Mg(2+) binding site. Positions 218 and 219 each coordinate Mg(2+). Residue Asp219 participates in CDP binding. Lys220 serves as a coordination point for AMP. An ATP-binding site is contributed by Lys220. Gly238 contributes to the ADP binding site. A CDP-binding site is contributed by Gly238. An AMP-binding site is contributed by Gly239. Gly239 provides a ligand contact to ATP. 2 positions are modified to N6-acetyllysine: Lys267 and Lys291. AMP is bound at residue Gly313. Residue Gly313 coordinates ATP. Gly338 and Phe343 together coordinate CDP. Phe343 is an ADP binding site. Position 344 (Glu344) interacts with AMP. The ATP site is built by Glu344, Asp375, and Thr376. Asp375 contributes to the Mg(2+) binding site.

This sequence belongs to the phosphoglycerate kinase family. Monomer. Mg(2+) serves as cofactor.

The protein localises to the cytoplasm. It carries out the reaction (2R)-3-phosphoglycerate + ATP = (2R)-3-phospho-glyceroyl phosphate + ADP. The protein operates within carbohydrate degradation; glycolysis; pyruvate from D-glyceraldehyde 3-phosphate: step 2/5. In terms of biological role, essential for sperm motility and male fertility but is not required for the completion of spermatogenesis. The sequence is that of Phosphoglycerate kinase 2 (PGK2) from Macaca fascicularis (Crab-eating macaque).